The following is a 155-amino-acid chain: Small ribosomal subunit protein uS7 (155 aa).

This sequence belongs to the universal ribosomal protein uS7 family. As to quaternary structure, part of the 30S ribosomal subunit. Contacts proteins S9 and S11.

Its function is as follows. One of the primary rRNA binding proteins, it binds directly to 16S rRNA where it nucleates assembly of the head domain of the 30S subunit. Is located at the subunit interface close to the decoding center, probably blocks exit of the E-site tRNA. This Chlorobium phaeobacteroides (strain DSM 266 / SMG 266 / 2430) protein is Small ribosomal subunit protein uS7.